Here is a 332-residue protein sequence, read N- to C-terminus: Glyceraldehyde-3-phosphate dehydrogenase 2 (332 aa).

NAD(+) contacts are provided by residues 11 to 12, Asp-32, and Arg-77; that span reads RI. D-glyceraldehyde 3-phosphate is bound by residues 148 to 150, Thr-179, 208 to 209, and Arg-231; these read SCT and TG. Cys-149 functions as the Nucleophile in the catalytic mechanism. Asn-313 lines the NAD(+) pocket.

This sequence belongs to the glyceraldehyde-3-phosphate dehydrogenase family. In terms of assembly, homotetramer.

It localises to the cytoplasm. The catalysed reaction is D-glyceraldehyde 3-phosphate + phosphate + NAD(+) = (2R)-3-phospho-glyceroyl phosphate + NADH + H(+). It functions in the pathway carbohydrate degradation; glycolysis; pyruvate from D-glyceraldehyde 3-phosphate: step 1/5. In Drosophila pseudoobscura pseudoobscura (Fruit fly), this protein is Glyceraldehyde-3-phosphate dehydrogenase 2 (Gapdh2).